We begin with the raw amino-acid sequence, 278 residues long: ATP synthase subunit delta (278 aa).

The protein belongs to the ATPase delta chain family. As to quaternary structure, F-type ATPases have 2 components, F(1) - the catalytic core - and F(0) - the membrane proton channel. F(1) has five subunits: alpha(3), beta(3), gamma(1), delta(1), epsilon(1). F(0) has three main subunits: a(1), b(2) and c(10-14). The alpha and beta chains form an alternating ring which encloses part of the gamma chain. F(1) is attached to F(0) by a central stalk formed by the gamma and epsilon chains, while a peripheral stalk is formed by the delta and b chains.

It localises to the cell membrane. F(1)F(0) ATP synthase produces ATP from ADP in the presence of a proton or sodium gradient. F-type ATPases consist of two structural domains, F(1) containing the extramembraneous catalytic core and F(0) containing the membrane proton channel, linked together by a central stalk and a peripheral stalk. During catalysis, ATP synthesis in the catalytic domain of F(1) is coupled via a rotary mechanism of the central stalk subunits to proton translocation. Its function is as follows. This protein is part of the stalk that links CF(0) to CF(1). It either transmits conformational changes from CF(0) to CF(1) or is implicated in proton conduction. This chain is ATP synthase subunit delta, found in Bifidobacterium longum subsp. infantis (strain ATCC 15697 / DSM 20088 / JCM 1222 / NCTC 11817 / S12).